Here is a 379-residue protein sequence, read N- to C-terminus: Endonuclease III homolog 1, chloroplastic (379 aa).

The transit peptide at methionine 1–glutamate 54 directs the protein to the chloroplast. One can recognise a HhH domain in the interval lysine 244 to histidine 272. Lysine 265 functions as the Nucleophile; for N-glycosylase activity in the catalytic mechanism. [4Fe-4S] cluster contacts are provided by cysteine 340, cysteine 347, cysteine 350, and cysteine 356.

The protein belongs to the Nth/MutY family. [4Fe-4S] cluster is required as a cofactor. In terms of tissue distribution, expressed at low levels in roots, stems, leaves and flowers.

It is found in the plastid. It localises to the chloroplast stroma. Its subcellular location is the chloroplast nucleoid. The enzyme catalyses 2'-deoxyribonucleotide-(2'-deoxyribose 5'-phosphate)-2'-deoxyribonucleotide-DNA = a 3'-end 2'-deoxyribonucleotide-(2,3-dehydro-2,3-deoxyribose 5'-phosphate)-DNA + a 5'-end 5'-phospho-2'-deoxyribonucleoside-DNA + H(+). Its function is as follows. Bifunctional DNA N-glycosylase with associated apurinic/apyrimidinic (AP) lyase function that catalyzes the first step in base excision repair (BER), the primary repair pathway for the repair of oxidative DNA damage. The DNA N-glycosylase activity releases the damaged DNA base from DNA by cleaving the N-glycosidic bond, leaving an AP site. The AP lyase activity cleaves the phosphodiester bond 3' to the AP site by a beta-elimination. Primarily recognizes and repairs oxidative base damage of pyrimidines. This is Endonuclease III homolog 1, chloroplastic from Arabidopsis thaliana (Mouse-ear cress).